Reading from the N-terminus, the 331-residue chain is Ribosomal RNA small subunit methyltransferase C (331 aa).

Belongs to the methyltransferase superfamily. RsmC family. In terms of assembly, monomer.

The protein localises to the cytoplasm. The catalysed reaction is guanosine(1207) in 16S rRNA + S-adenosyl-L-methionine = N(2)-methylguanosine(1207) in 16S rRNA + S-adenosyl-L-homocysteine + H(+). Functionally, specifically methylates the guanine in position 1207 of 16S rRNA in the 30S particle. This chain is Ribosomal RNA small subunit methyltransferase C, found in Pseudomonas putida (strain W619).